A 253-amino-acid polypeptide reads, in one-letter code: Chitooligosaccharide deacetylase (253 aa).

Mg(2+) is bound by residues His61 and His126.

Belongs to the YdjC deacetylase family. ChbG subfamily. Homodimer. It depends on Mg(2+) as a cofactor.

It localises to the cytoplasm. It carries out the reaction N,N'-diacetylchitobiose + H2O = N-acetyl-beta-D-glucosaminyl-(1-&gt;4)-D-glucosamine + acetate. It catalyses the reaction diacetylchitobiose-6'-phosphate + H2O = N'-monoacetylchitobiose-6'-phosphate + acetate. It participates in glycan degradation; chitin degradation. Involved in the degradation of chitin. ChbG is essential for growth on the acetylated chitooligosaccharides chitobiose and chitotriose but is dispensable for growth on cellobiose and chitosan dimer, the deacetylated form of chitobiose. Deacetylation of chitobiose-6-P and chitotriose-6-P is necessary for both the activation of the chb promoter by the regulatory protein ChbR and the hydrolysis of phosphorylated beta-glucosides by the phospho-beta-glucosidase ChbF. Catalyzes the removal of only one acetyl group from chitobiose-6-P to yield monoacetylchitobiose-6-P, the inducer of ChbR and the substrate of ChbF. The sequence is that of Chitooligosaccharide deacetylase from Serratia marcescens.